The sequence spans 408 residues: Acetylornithine aminotransferase (408 aa).

Pyridoxal 5'-phosphate-binding positions include 107–108 and phenylalanine 141; that span reads GT. N(2)-acetyl-L-ornithine is bound at residue arginine 144. 227–230 contributes to the pyridoxal 5'-phosphate binding site; it reads DEIQ. N6-(pyridoxal phosphate)lysine is present on lysine 256. Position 284 (threonine 284) interacts with N(2)-acetyl-L-ornithine. Threonine 285 serves as a coordination point for pyridoxal 5'-phosphate.

The protein belongs to the class-III pyridoxal-phosphate-dependent aminotransferase family. ArgD subfamily. In terms of assembly, homodimer. It depends on pyridoxal 5'-phosphate as a cofactor.

The protein resides in the cytoplasm. It carries out the reaction N(2)-acetyl-L-ornithine + 2-oxoglutarate = N-acetyl-L-glutamate 5-semialdehyde + L-glutamate. It functions in the pathway amino-acid biosynthesis; L-arginine biosynthesis; N(2)-acetyl-L-ornithine from L-glutamate: step 4/4. The chain is Acetylornithine aminotransferase from Xanthomonas campestris pv. campestris (strain ATCC 33913 / DSM 3586 / NCPPB 528 / LMG 568 / P 25).